The primary structure comprises 211 residues: ATP phosphoribosyltransferase (211 aa).

The protein belongs to the ATP phosphoribosyltransferase family. Short subfamily. As to quaternary structure, heteromultimer composed of HisG and HisZ subunits.

The protein localises to the cytoplasm. It catalyses the reaction 1-(5-phospho-beta-D-ribosyl)-ATP + diphosphate = 5-phospho-alpha-D-ribose 1-diphosphate + ATP. Its pathway is amino-acid biosynthesis; L-histidine biosynthesis; L-histidine from 5-phospho-alpha-D-ribose 1-diphosphate: step 1/9. Catalyzes the condensation of ATP and 5-phosphoribose 1-diphosphate to form N'-(5'-phosphoribosyl)-ATP (PR-ATP). Has a crucial role in the pathway because the rate of histidine biosynthesis seems to be controlled primarily by regulation of HisG enzymatic activity. This Pseudomonas savastanoi pv. phaseolicola (strain 1448A / Race 6) (Pseudomonas syringae pv. phaseolicola (strain 1448A / Race 6)) protein is ATP phosphoribosyltransferase.